Reading from the N-terminus, the 361-residue chain is Phosphoserine aminotransferase (361 aa).

Arginine 42 is an L-glutamate binding site. Pyridoxal 5'-phosphate-binding positions include 76–77, tryptophan 102, threonine 153, aspartate 173, and glutamine 196; that span reads AR. An N6-(pyridoxal phosphate)lysine modification is found at lysine 197. 238–239 is a binding site for pyridoxal 5'-phosphate; it reads NT.

The protein belongs to the class-V pyridoxal-phosphate-dependent aminotransferase family. SerC subfamily. Homodimer. Requires pyridoxal 5'-phosphate as cofactor.

It localises to the cytoplasm. The enzyme catalyses O-phospho-L-serine + 2-oxoglutarate = 3-phosphooxypyruvate + L-glutamate. The catalysed reaction is 4-(phosphooxy)-L-threonine + 2-oxoglutarate = (R)-3-hydroxy-2-oxo-4-phosphooxybutanoate + L-glutamate. The protein operates within amino-acid biosynthesis; L-serine biosynthesis; L-serine from 3-phospho-D-glycerate: step 2/3. Its pathway is cofactor biosynthesis; pyridoxine 5'-phosphate biosynthesis; pyridoxine 5'-phosphate from D-erythrose 4-phosphate: step 3/5. Functionally, catalyzes the reversible conversion of 3-phosphohydroxypyruvate to phosphoserine and of 3-hydroxy-2-oxo-4-phosphonooxybutanoate to phosphohydroxythreonine. The protein is Phosphoserine aminotransferase of Yersinia pestis bv. Antiqua (strain Angola).